The primary structure comprises 79 residues: MKLTCVLIIAVLFLTACQLTTGETYSRGEQKDHALRSTDKNSKLTRQCSPNGGSCSRHYHCCSLWCNKDSGVCVATSYP.

A signal peptide spans 1–22 (MKLTCVLIIAVLFLTACQLTTG). Residues 23–46 (ETYSRGEQKDHALRSTDKNSKLTR) constitute a propeptide that is removed on maturation. Residue Q47 is modified to Pyrrolidone carboxylic acid. 3 disulfide bridges follow: C48–C62, C55–C66, and C61–C73.

The protein belongs to the conotoxin O1 superfamily. In terms of tissue distribution, expressed by the venom duct.

It is found in the secreted. This Conus arenatus (Sand-dusted cone) protein is Conotoxin ArMKLT2-031.